The sequence spans 360 residues: MRTELFDFDLPASSIALRPVSPRDAARMLVVRPGATLEDRAVRDLPALLQPGDQLVVNDTRVIAAQLTGRRIGRATEPRIEATLIKRLDGSRWQALVKPAKKLAEGDVVRFGHDGRVCLLGHLDATVEAKGDAGEVTLAFTFHGPALDQAIAELGATPLPPYIASKRTPDDQDAADYQTMFAANEGAVAAPTAGLHFTPELDAALKARGVTLHRLTLHVGAGTFLPVKVDDTAEHKMHAEWGTISEATADALNAARAQGGRIVAVGTTSLRLLESAAREDGTIAPFADETAIFITPGYRFRAVDALMTNFHLPRSTLFMLVSAFCGLETMQAAYRHAIDSGYRFYSYGDASLLFREPASR.

It belongs to the QueA family. As to quaternary structure, monomer.

The protein localises to the cytoplasm. The enzyme catalyses 7-aminomethyl-7-carbaguanosine(34) in tRNA + S-adenosyl-L-methionine = epoxyqueuosine(34) in tRNA + adenine + L-methionine + 2 H(+). It functions in the pathway tRNA modification; tRNA-queuosine biosynthesis. Transfers and isomerizes the ribose moiety from AdoMet to the 7-aminomethyl group of 7-deazaguanine (preQ1-tRNA) to give epoxyqueuosine (oQ-tRNA). The protein is S-adenosylmethionine:tRNA ribosyltransferase-isomerase of Rhodopseudomonas palustris (strain BisB5).